We begin with the raw amino-acid sequence, 173 residues long: Putative phosphoesterase GWCH70_0799 (173 aa).

The Proton donor role is filled by His34. 2 short sequence motifs (HXTX) span residues 34-37 (HLTL) and 115-118 (HITI). Residue His115 is the Proton acceptor of the active site.

Belongs to the 2H phosphoesterase superfamily. YjcG family.

The chain is Putative phosphoesterase GWCH70_0799 from Geobacillus sp. (strain WCH70).